Consider the following 277-residue polypeptide: MNKEELLGFLLDDSIDSQKRCVTDQQAYSNWLKNDNDERTAHEESSSQSTIAALNKKKQTEAAQEDIEELLNGLEGIIGGADPRNLKSKSKRKTKKGGSKPREENVNTEKHIVMLEVEDFSDMSTHEDVNGASPSPNLDRSKKNEKRRKNAKELSYDELKDKLEVTTRKSRLECKDLKKKVHGLERRNLELEQRLEELKIENQTLIEINNKLLKNTNEDEINKSQRNKEKDRKRRERRTARRKDERKQEKKQEKKQDNKTSQSFPSSTDMNGQPIEF.

Disordered stretches follow at residues 33–168 (KNDN…VTTR) and 210–277 (NKLL…PIEF). The span at 34 to 45 (NDNDERTAHEES) shows a compositional bias: basic and acidic residues. Positions 86–99 (LKSKSKRKTKKGGS) are enriched in basic residues. Basic and acidic residues-rich tracts occupy residues 100–113 (KPREENVNTEKHIV), 151–168 (AKELSYDELKDKLEVTTR), and 216–230 (TNEDEINKSQRNKEK). The span at 231–241 (DRKRRERRTAR) shows a compositional bias: basic residues. Basic and acidic residues predominate over residues 242–258 (RKDERKQEKKQEKKQDN). Over residues 259–271 (KTSQSFPSSTDMN) the composition is skewed to polar residues.

The protein localises to the cytoplasm. This is an uncharacterized protein from Saccharomyces cerevisiae (strain ATCC 204508 / S288c) (Baker's yeast).